The primary structure comprises 185 residues: Elongation factor P (185 aa).

This sequence belongs to the elongation factor P family.

It localises to the cytoplasm. The protein operates within protein biosynthesis; polypeptide chain elongation. Involved in peptide bond synthesis. Stimulates efficient translation and peptide-bond synthesis on native or reconstituted 70S ribosomes in vitro. Probably functions indirectly by altering the affinity of the ribosome for aminoacyl-tRNA, thus increasing their reactivity as acceptors for peptidyl transferase. This is Elongation factor P from Staphylococcus saprophyticus subsp. saprophyticus (strain ATCC 15305 / DSM 20229 / NCIMB 8711 / NCTC 7292 / S-41).